Consider the following 100-residue polypeptide: Urease subunit gamma (100 aa).

The protein belongs to the urease gamma subunit family. In terms of assembly, heterotrimer of UreA (gamma), UreB (beta) and UreC (alpha) subunits. Three heterotrimers associate to form the active enzyme.

It is found in the cytoplasm. It carries out the reaction urea + 2 H2O + H(+) = hydrogencarbonate + 2 NH4(+). It functions in the pathway nitrogen metabolism; urea degradation; CO(2) and NH(3) from urea (urease route): step 1/1. This Cupriavidus necator (strain ATCC 17699 / DSM 428 / KCTC 22496 / NCIMB 10442 / H16 / Stanier 337) (Ralstonia eutropha) protein is Urease subunit gamma.